A 193-amino-acid polypeptide reads, in one-letter code: Leucyl/phenylalanyl-tRNA--protein transferase (193 aa).

Belongs to the L/F-transferase family.

Its subcellular location is the cytoplasm. The enzyme catalyses N-terminal L-lysyl-[protein] + L-leucyl-tRNA(Leu) = N-terminal L-leucyl-L-lysyl-[protein] + tRNA(Leu) + H(+). The catalysed reaction is N-terminal L-arginyl-[protein] + L-leucyl-tRNA(Leu) = N-terminal L-leucyl-L-arginyl-[protein] + tRNA(Leu) + H(+). It catalyses the reaction L-phenylalanyl-tRNA(Phe) + an N-terminal L-alpha-aminoacyl-[protein] = an N-terminal L-phenylalanyl-L-alpha-aminoacyl-[protein] + tRNA(Phe). Functions in the N-end rule pathway of protein degradation where it conjugates Leu, Phe and, less efficiently, Met from aminoacyl-tRNAs to the N-termini of proteins containing an N-terminal arginine or lysine. This is Leucyl/phenylalanyl-tRNA--protein transferase from Akkermansia muciniphila (strain ATCC BAA-835 / DSM 22959 / JCM 33894 / BCRC 81048 / CCUG 64013 / CIP 107961 / Muc).